We begin with the raw amino-acid sequence, 89 residues long: Small ribosomal subunit protein bS20 (89 aa).

The protein belongs to the bacterial ribosomal protein bS20 family.

In terms of biological role, binds directly to 16S ribosomal RNA. This Xanthobacter autotrophicus (strain ATCC BAA-1158 / Py2) protein is Small ribosomal subunit protein bS20.